Reading from the N-terminus, the 358-residue chain is Probable tartrate dehydrogenase/decarboxylase TtuC' (358 aa).

Residues Asp222, Asp246, and Asp250 each contribute to the Mn(2+) site.

This sequence belongs to the isocitrate and isopropylmalate dehydrogenases family. It depends on Mg(2+) as a cofactor. The cofactor is Mn(2+). K(+) serves as cofactor.

It localises to the cytoplasm. The enzyme catalyses tartrate + NAD(+) = 2-hydroxy-3-oxosuccinate + NADH + H(+). The catalysed reaction is (2R,3S)-tartrate + NAD(+) = 2-hydroxy-3-oxosuccinate + NADH + H(+). It catalyses the reaction (2R,3R)-tartrate + NAD(+) = 2-hydroxy-3-oxosuccinate + NADH + H(+). It carries out the reaction (2R,3R)-tartrate + H(+) = (R)-glycerate + CO2. The enzyme catalyses (R)-malate + NAD(+) = pyruvate + CO2 + NADH. The protein operates within carbohydrate acid metabolism; tartrate degradation; 2-hydroxy-3-oxosuccinate from L-tartrate: step 1/1. Its pathway is carbohydrate acid metabolism; tartrate degradation; 2-hydroxy-3-oxosuccinate from meso-tartrate: step 1/1. It functions in the pathway carbohydrate acid metabolism; tartrate degradation; D-glycerate from L-tartrate: step 1/1. Has multiple catalytic activities. Apart from catalyzing the oxidation of (+)-tartrate to oxaloglycolate, also converts meso-tartrate to D-glycerate and catalyzes the oxidative decarboxylation of D-malate to pyruvate. This is Probable tartrate dehydrogenase/decarboxylase TtuC' (ttuC') from Agrobacterium vitis (Rhizobium vitis).